We begin with the raw amino-acid sequence, 539 residues long: G protein-coupled receptor associated sorting protein 3 (539 aa).

The span at 1–10 (MTGSKNKARA) shows a compositional bias: basic residues. Disordered stretches follow at residues 1–112 (MTGS…NWFW) and 134–172 (VAKC…EENV). 2 stretches are compositionally biased toward basic and acidic residues: residues 66–80 (VVAE…ESKA) and 88–106 (FNHR…DKPS). A compositionally biased stretch (polar residues) spans 134–146 (VAKCENKPSTSIQ).

This sequence belongs to the GPRASP family. Homodimer.

It localises to the cytoplasm. The protein localises to the nucleus. Its function is as follows. Survival and differentiation promoting protein that plays a role in the regulation of neurosynaptogenesis. Induces phosphatase PP2A activity which results in APP dephosphorylation and inhibits BACE1-mediated processing of APP. The protein is G protein-coupled receptor associated sorting protein 3 (Gprasp3) of Mus musculus (Mouse).